Consider the following 260-residue polypeptide: UPF0246 protein Bphyt_1375 (260 aa).

This sequence belongs to the UPF0246 family.

This Paraburkholderia phytofirmans (strain DSM 17436 / LMG 22146 / PsJN) (Burkholderia phytofirmans) protein is UPF0246 protein Bphyt_1375.